The primary structure comprises 920 residues: 2-oxoadipate dehydrogenase complex component E1 (920 aa).

The disordered stretch occupies residues 299–322; sequence QGKTRGRQQVKQDGDYSTDPHSRP. Residues 308-322 show a composition bias toward basic and acidic residues; it reads VKQDGDYSTDPHSRP.

It belongs to the alpha-ketoglutarate dehydrogenase family. As to quaternary structure, the 2-oxoadipate dehydrogenase complex is composed of OADH (2-oxoadipate dehydrogenase; E1a), DLST (dihydrolipoamide succinyltransferase; E2) and DLD (dihydrolipoamide dehydrogenase; E3). E1a functional unit is a dimer. Thiamine diphosphate is required as a cofactor.

It is found in the mitochondrion. It catalyses the reaction N(6)-[(R)-lipoyl]-L-lysyl-[protein] + 2-oxoadipate + H(+) = N(6)-[(R)-S(8)-glutaryldihydrolipoyl]-L-lysyl-[protein] + CO2. The protein operates within amino-acid degradation. Its function is as follows. 2-oxoadipate dehydrogenase (E1a) component of the 2-oxoadipate dehydrogenase complex (OADHC). Participates in the first step, rate limiting for the overall conversion of 2-oxoadipate (alpha-ketoadipate) to glutaryl-CoA and CO(2) catalyzed by the whole OADHC. Catalyzes the irreversible decarboxylation of 2-oxoadipate via the thiamine diphosphate (ThDP) cofactor and subsequent transfer of the decarboxylated acyl intermediate on an oxidized dihydrolipoyl group that is covalently amidated to the E2 enzyme (dihydrolipoyllysine-residue succinyltransferase or DLST). Can catalyze the decarboxylation of 2-oxoglutarate in vitro, but at a much lower rate than 2-oxoadipate. Responsible for the last step of L-lysine, L-hydroxylysine and L-tryptophan catabolism with the common product being 2-oxoadipate. The sequence is that of 2-oxoadipate dehydrogenase complex component E1 (dhtkd1) from Danio rerio (Zebrafish).